Here is a 630-residue protein sequence, read N- to C-terminus: Biosynthetic arginine decarboxylase (630 aa).

Lysine 99 carries the N6-(pyridoxal phosphate)lysine modification. Residue 281 to 291 (VDIGGGLGVDY) coordinates substrate.

It belongs to the Orn/Lys/Arg decarboxylase class-II family. SpeA subfamily. The cofactor is Mg(2+). It depends on pyridoxal 5'-phosphate as a cofactor.

It catalyses the reaction L-arginine + H(+) = agmatine + CO2. In terms of biological role, catalyzes the biosynthesis of agmatine from arginine. This is Biosynthetic arginine decarboxylase from Bacteroides thetaiotaomicron (strain ATCC 29148 / DSM 2079 / JCM 5827 / CCUG 10774 / NCTC 10582 / VPI-5482 / E50).